Consider the following 718-residue polypeptide: Peroxisomal bifunctional enzyme (718 aa).

Positions 2 to 280 (ARYELVKRSV…FAQRTAEKWT (279 aa)) are enoyl-CoA hydratase / isomerase. Position 100 (glycine 100) interacts with substrate. Positions 281–567 (LPSGAQWNNS…DMVCQQGRFG (287 aa)) are 3-hydroxyacyl-CoA dehydrogenase. Residues 716-718 (SHL) carry the Microbody targeting signal motif.

It in the N-terminal section; belongs to the enoyl-CoA hydratase/isomerase family. The protein in the C-terminal section; belongs to the 3-hydroxyacyl-CoA dehydrogenase family. As to quaternary structure, monomer.

The protein localises to the peroxisome. It catalyses the reaction a (3S)-3-hydroxyacyl-CoA = a (2E)-enoyl-CoA + H2O. The catalysed reaction is a 4-saturated-(3S)-3-hydroxyacyl-CoA = a (3E)-enoyl-CoA + H2O. The enzyme catalyses a (3Z)-enoyl-CoA = a 4-saturated (2E)-enoyl-CoA. It carries out the reaction a (3E)-enoyl-CoA = a 4-saturated (2E)-enoyl-CoA. It catalyses the reaction a (3S)-3-hydroxyacyl-CoA + NAD(+) = a 3-oxoacyl-CoA + NADH + H(+). The catalysed reaction is (2S,3S)-3-hydroxy-2-methylbutanoyl-CoA = (2E)-2-methylbut-2-enoyl-CoA + H2O. The enzyme catalyses (3S)-hydroxyhexadecanoyl-CoA + NAD(+) = 3-oxohexadecanoyl-CoA + NADH + H(+). It carries out the reaction (3S)-hydroxyhexadecanoyl-CoA = (2E)-hexadecenoyl-CoA + H2O. It catalyses the reaction (2E)-hexadecenedioyl-CoA + H2O = (3S)-hydroxyhexadecanedioyl-CoA. The catalysed reaction is (3S)-hydroxyhexadecanedioyl-CoA + NAD(+) = 3-oxohexadecanedioyl-CoA + NADH + H(+). The enzyme catalyses (3E,5Z)-tetradecadienoyl-CoA = (2E,5Z)-tetradecadienoyl-CoA. It carries out the reaction (3E,5Z)-octadienoyl-CoA = (2E,5Z)-octadienoyl-CoA. It catalyses the reaction (3S)-hydroxydecanoyl-CoA + NAD(+) = 3-oxodecanoyl-CoA + NADH + H(+). The catalysed reaction is (3E)-decenoyl-CoA = (2E)-decenoyl-CoA. The enzyme catalyses (3Z)-hexenoyl-CoA = (2E)-hexenoyl-CoA. It carries out the reaction (3E)-hexenoyl-CoA = (2E)-hexenoyl-CoA. It catalyses the reaction (3S)-hydroxydecanoyl-CoA = (2E)-decenoyl-CoA + H2O. The catalysed reaction is (3S)-hydroxyhexanoyl-CoA = (2E)-hexenoyl-CoA + H2O. Its pathway is lipid metabolism; fatty acid beta-oxidation. Its function is as follows. Peroxisomal trifunctional enzyme possessing 2-enoyl-CoA hydratase, 3-hydroxyacyl-CoA dehydrogenase, and delta 3, delta 2-enoyl-CoA isomerase activities. Catalyzes two of the four reactions of the long straight chain fatty acids peroxisomal beta-oxidation pathway. Can also use branched-chain fatty acids such as 2-methyl-2E-butenoyl-CoA as a substrate, which is hydrated into (2S,3S)-3-hydroxy-2-methylbutanoyl-CoA. Optimal isomerase for 2,5 double bonds into 3,5 form isomerization in a range of enoyl-CoA species. Also able to isomerize both 3-cis and 3-trans double bonds into the 2-trans form in a range of enoyl-CoA species. Regulates the amount of medium-chain dicarboxylic fatty acids which are essential regulators of all fatty acid oxidation pathways. Also involved in the degradation of long-chain dicarboxylic acids through peroxisomal beta-oxidation. The sequence is that of Peroxisomal bifunctional enzyme (ehhadh) from Danio rerio (Zebrafish).